Consider the following 142-residue polypeptide: Small ribosomal subunit protein eS6 (142 aa).

Residues 117-142 (EKPLDELAPKKEKKEGAAGGRAPAKK) are disordered. Residues 118-132 (KPLDELAPKKEKKEG) show a composition bias toward basic and acidic residues.

It belongs to the eukaryotic ribosomal protein eS6 family.

The chain is Small ribosomal subunit protein eS6 from Methanocella arvoryzae (strain DSM 22066 / NBRC 105507 / MRE50).